The sequence spans 842 residues: Glucans biosynthesis glucosyltransferase H (842 aa).

A run of 8 helical transmembrane segments spans residues 140–160 (ILLL…KTIL), 194–214 (ILIL…TALM), 513–533 (VFLT…FLAL), 568–588 (IALF…SIIL), 600–620 (FIRV…LAPV), 622–642 (MLFH…VWNS), 656–676 (FMRH…MAWL), and 680–700 (FLFW…VSAI).

Belongs to the glycosyltransferase 2 family. OpgH subfamily.

The protein localises to the cell inner membrane. The protein operates within glycan metabolism; osmoregulated periplasmic glucan (OPG) biosynthesis. Involved in the biosynthesis of osmoregulated periplasmic glucans (OPGs). The polypeptide is Glucans biosynthesis glucosyltransferase H (Klebsiella pneumoniae (strain 342)).